A 508-amino-acid chain; its full sequence is Light-independent protochlorophyllide reductase subunit B (508 aa).

Asp36 is a binding site for [4Fe-4S] cluster. Asp294 acts as the Proton donor in catalysis. Residue 429–430 coordinates substrate; sequence GM.

It belongs to the ChlB/BchB/BchZ family. Protochlorophyllide reductase is composed of three subunits; ChlL, ChlN and ChlB. Forms a heterotetramer of two ChlB and two ChlN subunits. It depends on [4Fe-4S] cluster as a cofactor.

It carries out the reaction chlorophyllide a + oxidized 2[4Fe-4S]-[ferredoxin] + 2 ADP + 2 phosphate = protochlorophyllide a + reduced 2[4Fe-4S]-[ferredoxin] + 2 ATP + 2 H2O. Its pathway is porphyrin-containing compound metabolism; chlorophyll biosynthesis (light-independent). Its function is as follows. Component of the dark-operative protochlorophyllide reductase (DPOR) that uses Mg-ATP and reduced ferredoxin to reduce ring D of protochlorophyllide (Pchlide) to form chlorophyllide a (Chlide). This reaction is light-independent. The NB-protein (ChlN-ChlB) is the catalytic component of the complex. The chain is Light-independent protochlorophyllide reductase subunit B from Synechococcus elongatus (strain ATCC 33912 / PCC 7942 / FACHB-805) (Anacystis nidulans R2).